The chain runs to 141 residues: Large ribosomal subunit protein bL17 (141 aa).

Belongs to the bacterial ribosomal protein bL17 family. Part of the 50S ribosomal subunit. Contacts protein L32.

This is Large ribosomal subunit protein bL17 from Sinorhizobium medicae (strain WSM419) (Ensifer medicae).